The chain runs to 187 residues: MALKDTFKNLFNYFEVDEVNEVEEQADAYSMPNDRPKMRVANTTVAPVREQQPKVETRREARSESQLQRLHERQQELMTNNNEKEIVKTTIDIKFPKRYEDAPEMVNLLLDNASILIDFQYMSEQQARRCLDYLDGARSVLSGNLKKVSNTMWLLTPVNVTVNIEELRNAGTTTGVADSNFEFDIKR.

The protein belongs to the SepF family. In terms of assembly, homodimer. Interacts with FtsZ.

The protein resides in the cytoplasm. In terms of biological role, cell division protein that is part of the divisome complex and is recruited early to the Z-ring. Probably stimulates Z-ring formation, perhaps through the cross-linking of FtsZ protofilaments. Its function overlaps with FtsA. This Streptococcus suis (strain 98HAH33) protein is Cell division protein SepF.